A 102-amino-acid chain; its full sequence is Small ribosomal subunit protein bS18 (102 aa).

This sequence belongs to the bacterial ribosomal protein bS18 family. In terms of assembly, part of the 30S ribosomal subunit. Forms a tight heterodimer with protein bS6.

In terms of biological role, binds as a heterodimer with protein bS6 to the central domain of the 16S rRNA, where it helps stabilize the platform of the 30S subunit. This Orientia tsutsugamushi (strain Boryong) (Rickettsia tsutsugamushi) protein is Small ribosomal subunit protein bS18.